The sequence spans 103 residues: Large ribosomal subunit protein bL21 (103 aa).

It belongs to the bacterial ribosomal protein bL21 family. In terms of assembly, part of the 50S ribosomal subunit. Contacts protein L20.

In terms of biological role, this protein binds to 23S rRNA in the presence of protein L20. This is Large ribosomal subunit protein bL21 from Bordetella petrii (strain ATCC BAA-461 / DSM 12804 / CCUG 43448).